The primary structure comprises 445 residues: UPF0210 protein SPP_0289 (445 aa).

This sequence belongs to the UPF0210 family. Homodimer.

In Streptococcus pneumoniae (strain P1031), this protein is UPF0210 protein SPP_0289.